Reading from the N-terminus, the 381-residue chain is Cytochrome b (381 aa).

4 consecutive transmembrane segments (helical) span residues 34–54, 78–99, 114–134, and 179–199; these read FGSL…FLAM, WLIR…YLHI, WNIG…GYVL, and FFAF…LHFL. Heme b is bound by residues His84 and His98. Heme b is bound by residues His183 and His197. His202 provides a ligand contact to a ubiquinone. A run of 4 helical transmembrane segments spans residues 227–247, 289–309, 321–341, and 348–368; these read YKDI…VLFL, LGGV…PFLH, LTQL…WIGG, and FIFI…IITP.

It belongs to the cytochrome b family. The cytochrome bc1 complex contains 3 respiratory subunits (MT-CYB, CYC1 and UQCRFS1), 2 core proteins (UQCRC1 and UQCRC2) and probably 6 low-molecular weight proteins. Heme b serves as cofactor.

The protein localises to the mitochondrion inner membrane. Functionally, component of the ubiquinol-cytochrome c reductase complex (complex III or cytochrome b-c1 complex) that is part of the mitochondrial respiratory chain. The b-c1 complex mediates electron transfer from ubiquinol to cytochrome c. Contributes to the generation of a proton gradient across the mitochondrial membrane that is then used for ATP synthesis. In Heterodontus francisci (Horn shark), this protein is Cytochrome b (mt-cyb).